The primary structure comprises 37 residues: Large ribosomal subunit protein bL36 (37 aa).

It belongs to the bacterial ribosomal protein bL36 family.

This is Large ribosomal subunit protein bL36 from Chromobacterium violaceum (strain ATCC 12472 / DSM 30191 / JCM 1249 / CCUG 213 / NBRC 12614 / NCIMB 9131 / NCTC 9757 / MK).